Consider the following 84-residue polypeptide: Small ribosomal subunit protein bS16c (84 aa).

This sequence belongs to the bacterial ribosomal protein bS16 family.

Its subcellular location is the plastid. The protein localises to the chloroplast. This chain is Small ribosomal subunit protein bS16c, found in Anthoceros angustus (Hornwort).